The sequence spans 21 residues: Complement receptor 3-related protein (21 aa).

Its subcellular location is the secreted. Its function is as follows. Plays a role in adherence of C.albicans to buccal epithelial cells, and in biofilm formation. This is Complement receptor 3-related protein from Candida albicans (Yeast).